The sequence spans 113 residues: Large ribosomal subunit protein bL19 (113 aa).

It belongs to the bacterial ribosomal protein bL19 family.

Functionally, this protein is located at the 30S-50S ribosomal subunit interface and may play a role in the structure and function of the aminoacyl-tRNA binding site. The sequence is that of Large ribosomal subunit protein bL19 from Mycolicibacterium smegmatis (strain ATCC 700084 / mc(2)155) (Mycobacterium smegmatis).